The sequence spans 230 residues: Somatolactin (230 aa).

Residues 1 to 23 (MIKTKVLQAWMGIWLCAVNGLLG) form the signal peptide. Disulfide bonds link cysteine 28/cysteine 38, cysteine 87/cysteine 202, and cysteine 219/cysteine 227. Residue asparagine 177 is glycosylated (N-linked (GlcNAc...) asparagine).

Belongs to the somatotropin/prolactin family.

It localises to the secreted. This chain is Somatolactin, found in Ictalurus punctatus (Channel catfish).